Here is a 252-residue protein sequence, read N- to C-terminus: Small ribosomal subunit protein uS3 (252 aa).

The KH type-2 domain maps to 39 to 111 (IRKLINNFTK…DVNLNVLEVK (73 aa)). The tract at residues 222-252 (KPFASQSSNTPNRRPRNFKGGNNNHVNAKKN) is disordered. Positions 241 to 252 (GGNNNHVNAKKN) are enriched in polar residues.

This sequence belongs to the universal ribosomal protein uS3 family. In terms of assembly, part of the 30S ribosomal subunit. Forms a tight complex with proteins S10 and S14.

Its function is as follows. Binds the lower part of the 30S subunit head. Binds mRNA in the 70S ribosome, positioning it for translation. This Onion yellows phytoplasma (strain OY-M) protein is Small ribosomal subunit protein uS3.